A 165-amino-acid chain; its full sequence is UPF0114 protein Ent638_3411 (165 aa).

3 consecutive transmembrane segments (helical) span residues Leu15–Phe35, Leu53–Val73, and Leu136–Leu156.

Belongs to the UPF0114 family.

It localises to the cell membrane. The sequence is that of UPF0114 protein Ent638_3411 from Enterobacter sp. (strain 638).